The chain runs to 221 residues: N-acetyltransferase 8F1 (221 aa).

A helical membrane pass occupies residues 53-73; the sequence is LVLVSGSWLLAVVCIFFLLLL. An N-acetyltransferase domain is found at 69 to 219; it reads FLLLLLRFLA…RTIQLKYPFP (151 aa).

The protein belongs to the camello family.

Its subcellular location is the membrane. May play a role in regulation of gastrulation. This Rattus norvegicus (Rat) protein is N-acetyltransferase 8F1.